A 161-amino-acid polypeptide reads, in one-letter code: Bifurcating [FeFe] hydrogenase gamma subunit (161 aa).

Residues Cys78, Cys83, Cys119, and Cys123 each coordinate [2Fe-2S] cluster.

It belongs to the complex I 24 kDa subunit family. Heterotrimer composed of HydA (alpha subunit), HydB (beta subunit) and HydC (gamma subunit). Near neutral and acidic pH conditions favor oligomerization of the heterotrimeric holoenzyme. [2Fe-2S] cluster is required as a cofactor.

The protein resides in the cytoplasm. It catalyses the reaction 2 H2 + 2 oxidized [2Fe-2S]-[ferredoxin] + NAD(+) = 2 reduced [2Fe-2S]-[ferredoxin] + NADH + 3 H(+). Its function is as follows. Catalyzes the oxidation of the physiological electron carriers NADH and reduced ferredoxin, coupled to the production of H(2). Acts as a bifurcating [FeFe] hydrogenase, which uses the exergonic oxidation of reduced ferredoxin to drive the unfavorable oxidation of NADH to produce H(2). The gamma subunit might be the site where reduced ferredoxin is oxidized. The polypeptide is Bifurcating [FeFe] hydrogenase gamma subunit (Thermotoga maritima (strain ATCC 43589 / DSM 3109 / JCM 10099 / NBRC 100826 / MSB8)).